The sequence spans 291 residues: MTAQLIDGKALAAQVRQEVEEGVAAFIADGWAAPGLAVVLVGCDAASQVYVENKIRQTEAVGMRSERFLLPADTDESQLLTLIEQLNNNDAIHGILVQFPLPPQIDVSRVISAIHPSKDVDGFNPLNVGRLAAGLEGGLTPCTPLGVMRLIRSVHPDIAGMGALVVGASNVVGRPLARLLLQADCTVSIAHIRTTDLARRCREADILVVATGVPGLIRGDYIKPGATVIDVGISRVRLPNGRDKLTGDVAFEEAVEVAGAITPVPGGVGPMTIAYLLANTLQAARAAVRLR.

NADP(+) is bound by residues 167–169 (GAS), Ile-192, and Ile-233.

It belongs to the tetrahydrofolate dehydrogenase/cyclohydrolase family. As to quaternary structure, homodimer.

It carries out the reaction (6R)-5,10-methylene-5,6,7,8-tetrahydrofolate + NADP(+) = (6R)-5,10-methenyltetrahydrofolate + NADPH. The catalysed reaction is (6R)-5,10-methenyltetrahydrofolate + H2O = (6R)-10-formyltetrahydrofolate + H(+). Its pathway is one-carbon metabolism; tetrahydrofolate interconversion. Functionally, catalyzes the oxidation of 5,10-methylenetetrahydrofolate to 5,10-methenyltetrahydrofolate and then the hydrolysis of 5,10-methenyltetrahydrofolate to 10-formyltetrahydrofolate. In Pseudomonas putida (strain ATCC 47054 / DSM 6125 / CFBP 8728 / NCIMB 11950 / KT2440), this protein is Bifunctional protein FolD 1.